Consider the following 83-residue polypeptide: MKTSMFLTLTGLVLLFVVCYASESEEKDFPKELLSSIFAADSDFKVEERGCLGDKCDYNNGCCSGYVCSRTWKWCVLAGPWRR.

The N-terminal stretch at 1-21 is a signal peptide; it reads MKTSMFLTLTGLVLLFVVCYA. Residues 22–49 constitute a propeptide that is removed on maturation; that stretch reads SESEEKDFPKELLSSIFAADSDFKVEER. Intrachain disulfides connect Cys51–Cys63, Cys56–Cys68, and Cys62–Cys75.

The protein belongs to the neurotoxin 10 (Hwtx-1) family. 51 (Hntx-8) subfamily. Hntx-8 sub-subfamily. Expressed by the venom gland.

The protein resides in the secreted. In terms of biological role, agglutinates erythrocytes. The protein is U5-theraphotoxin-Hs1a 3 of Cyriopagopus schmidti (Chinese bird spider).